A 185-amino-acid chain; its full sequence is Ribosome-recycling factor (185 aa).

Belongs to the RRF family.

The protein localises to the cytoplasm. Responsible for the release of ribosomes from messenger RNA at the termination of protein biosynthesis. May increase the efficiency of translation by recycling ribosomes from one round of translation to another. The polypeptide is Ribosome-recycling factor (Mycobacterium avium (strain 104)).